The primary structure comprises 901 residues: Valine--tRNA ligase (901 aa).

The 'KMSKS' region motif lies at 536–540 (KLSKS). Lys539 is an ATP binding site. Positions 831-901 (LEGLISFEKE…KLQGNLEVLS (71 aa)) form a coiled coil.

This sequence belongs to the class-I aminoacyl-tRNA synthetase family. ValS type 1 subfamily. As to quaternary structure, monomer.

The protein resides in the cytoplasm. The enzyme catalyses tRNA(Val) + L-valine + ATP = L-valyl-tRNA(Val) + AMP + diphosphate. Functionally, catalyzes the attachment of valine to tRNA(Val). As ValRS can inadvertently accommodate and process structurally similar amino acids such as threonine, to avoid such errors, it has a 'posttransfer' editing activity that hydrolyzes mischarged Thr-tRNA(Val) in a tRNA-dependent manner. The chain is Valine--tRNA ligase from Chlorobaculum tepidum (strain ATCC 49652 / DSM 12025 / NBRC 103806 / TLS) (Chlorobium tepidum).